The following is a 226-amino-acid chain: PKHD-type hydroxylase Bind_0236 (226 aa).

A Fe2OG dioxygenase domain is found at 78–178 (TIFPPLFNRY…RIASFFWIQS (101 aa)). Fe cation is bound by residues H96, D98, and H159. Residue R169 participates in 2-oxoglutarate binding.

Fe(2+) is required as a cofactor. The cofactor is L-ascorbate.

The sequence is that of PKHD-type hydroxylase Bind_0236 from Beijerinckia indica subsp. indica (strain ATCC 9039 / DSM 1715 / NCIMB 8712).